The primary structure comprises 96 residues: uncharacterized protein (96 aa).

The N-linked (GlcNAc...) asparagine glycan is linked to asparagine 4. The chain crosses the membrane as a helical span at residues 59–81 (VFFTIFDTIITIIVRSGIPFPLL).

Its subcellular location is the membrane. This is an uncharacterized protein from Saccharomyces cerevisiae (strain ATCC 204508 / S288c) (Baker's yeast).